Here is a 430-residue protein sequence, read N- to C-terminus: Adenylosuccinate synthetase (430 aa).

Residues Gly12–Lys18 and Gly40–Thr42 contribute to the GTP site. Asp13 functions as the Proton acceptor in the catalytic mechanism. The Mg(2+) site is built by Asp13 and Gly40. Residues Asp13–Lys16, Asn38–His41, Thr130, Arg144, Gln224, Thr239, and Arg303 each bind IMP. The active-site Proton donor is the His41. Thr299–Arg305 lines the substrate pocket. GTP contacts are provided by residues Arg305, Lys331–Asp333, and Ser413–Ser415.

This sequence belongs to the adenylosuccinate synthetase family. In terms of assembly, homodimer. It depends on Mg(2+) as a cofactor.

Its subcellular location is the cytoplasm. The catalysed reaction is IMP + L-aspartate + GTP = N(6)-(1,2-dicarboxyethyl)-AMP + GDP + phosphate + 2 H(+). It participates in purine metabolism; AMP biosynthesis via de novo pathway; AMP from IMP: step 1/2. Its function is as follows. Plays an important role in the de novo pathway of purine nucleotide biosynthesis. Catalyzes the first committed step in the biosynthesis of AMP from IMP. The protein is Adenylosuccinate synthetase of Parvibaculum lavamentivorans (strain DS-1 / DSM 13023 / NCIMB 13966).